Reading from the N-terminus, the 208-residue chain is MTDVTPANAARIGIGGPVGSGKTALIERLIPVLQARGVDLAVITNDLVTKEDAERLRRSGLIDPSRVEAVEAGACPHTVIREDPTLNIAAGDALEARFPGLQLLVFESGGDNLASTFSLDLVDWWIFVIDVAGGDDIPRKRGPGVLRCDLLVINKIDLAPHVGVDLEGMLAEAARVRGGKPVIATNARAGLGIDRVADAIGRAVLFTP.

Residue G16–T23 participates in GTP binding.

This sequence belongs to the SIMIBI class G3E GTPase family. UreG subfamily. Homodimer. UreD, UreF and UreG form a complex that acts as a GTP-hydrolysis-dependent molecular chaperone, activating the urease apoprotein by helping to assemble the nickel containing metallocenter of UreC. The UreE protein probably delivers the nickel.

The protein localises to the cytoplasm. In terms of biological role, facilitates the functional incorporation of the urease nickel metallocenter. This process requires GTP hydrolysis, probably effectuated by UreG. This chain is Urease accessory protein UreG 2, found in Methylobacterium radiotolerans (strain ATCC 27329 / DSM 1819 / JCM 2831 / NBRC 15690 / NCIMB 10815 / 0-1).